Here is a 348-residue protein sequence, read N- to C-terminus: UDP-3-O-acylglucosamine N-acyltransferase (348 aa).

His-237 serves as the catalytic Proton acceptor.

This sequence belongs to the transferase hexapeptide repeat family. LpxD subfamily. As to quaternary structure, homotrimer.

It carries out the reaction a UDP-3-O-[(3R)-3-hydroxyacyl]-alpha-D-glucosamine + a (3R)-hydroxyacyl-[ACP] = a UDP-2-N,3-O-bis[(3R)-3-hydroxyacyl]-alpha-D-glucosamine + holo-[ACP] + H(+). It participates in bacterial outer membrane biogenesis; LPS lipid A biosynthesis. Catalyzes the N-acylation of UDP-3-O-acylglucosamine using 3-hydroxyacyl-ACP as the acyl donor. Is involved in the biosynthesis of lipid A, a phosphorylated glycolipid that anchors the lipopolysaccharide to the outer membrane of the cell. The protein is UDP-3-O-acylglucosamine N-acyltransferase of Geotalea daltonii (strain DSM 22248 / JCM 15807 / FRC-32) (Geobacter daltonii).